The chain runs to 184 residues: GTP cyclohydrolase 1 (184 aa).

Residues Cys75, His78, and Cys146 each coordinate Zn(2+).

Belongs to the GTP cyclohydrolase I family. As to quaternary structure, toroid-shaped homodecamer, composed of two pentamers of five dimers.

The catalysed reaction is GTP + H2O = 7,8-dihydroneopterin 3'-triphosphate + formate + H(+). It participates in cofactor biosynthesis; 7,8-dihydroneopterin triphosphate biosynthesis; 7,8-dihydroneopterin triphosphate from GTP: step 1/1. The protein is GTP cyclohydrolase 1 of Streptococcus pneumoniae serotype 2 (strain D39 / NCTC 7466).